Consider the following 125-residue polypeptide: Histone H2A (125 aa).

The segment covering 1-18 has biased composition (basic residues); it reads MSGRGKGGKARAKAKSRS. Positions 1–21 are disordered; it reads MSGRGKGGKARAKAKSRSSRA. The residue at position 2 (Ser2) is an N-acetylserine. Ser2 bears the Phosphoserine mark. Gln104 bears the N5-methylglutamine mark.

This sequence belongs to the histone H2A family. As to quaternary structure, the nucleosome is a histone octamer containing two molecules each of H2A, H2B, H3 and H4 assembled in one H3-H4 heterotetramer and two H2A-H2B heterodimers. The octamer wraps approximately 147 bp of DNA.

The protein localises to the nucleus. It localises to the chromosome. Functionally, core component of nucleosome. Nucleosomes wrap and compact DNA into chromatin, limiting DNA accessibility to the cellular machineries which require DNA as a template. Histones thereby play a central role in transcription regulation, DNA repair, DNA replication and chromosomal stability. DNA accessibility is regulated via a complex set of post-translational modifications of histones, also called histone code, and nucleosome remodeling. This is Histone H2A from Asterias rubens (Common European starfish).